Consider the following 244-residue polypeptide: SURF1-like protein (244 aa).

The next 2 helical transmembrane spans lie at isoleucine 7–serine 23 and tyrosine 201–tyrosine 219.

Belongs to the SURF1 family.

Its subcellular location is the cell membrane. The polypeptide is SURF1-like protein (Rickettsia prowazekii (strain Madrid E)).